Reading from the N-terminus, the 127-residue chain is Riboflavin kinase (127 aa).

A CDP-binding site is contributed by 10-15 (GLGEGR). 2 residues coordinate Mg(2+): Thr-39 and Asn-41. 2 residues coordinate FMN: Thr-96 and Glu-104. 109-112 (VHLR) is a CDP binding site.

Belongs to the archaeal riboflavin kinase family. Mg(2+) serves as cofactor.

It carries out the reaction riboflavin + CTP = CDP + FMN + H(+). The protein operates within cofactor biosynthesis; FMN biosynthesis; FMN from riboflavin (CTP route): step 1/1. Catalyzes the CTP-dependent phosphorylation of riboflavin (vitamin B2) to form flavin mononucleotide (FMN). This chain is Riboflavin kinase, found in Methanococcus maripaludis (strain C7 / ATCC BAA-1331).